The primary structure comprises 317 residues: tRNA dimethylallyltransferase (317 aa).

Position 19 to 26 (G19 to S26) interacts with ATP. T21 to S26 lines the substrate pocket. The segment at D44 to Q47 is interaction with substrate tRNA.

The protein belongs to the IPP transferase family. As to quaternary structure, monomer. Mg(2+) serves as cofactor.

The enzyme catalyses adenosine(37) in tRNA + dimethylallyl diphosphate = N(6)-dimethylallyladenosine(37) in tRNA + diphosphate. Catalyzes the transfer of a dimethylallyl group onto the adenine at position 37 in tRNAs that read codons beginning with uridine, leading to the formation of N6-(dimethylallyl)adenosine (i(6)A). The polypeptide is tRNA dimethylallyltransferase (Methylorubrum extorquens (strain PA1) (Methylobacterium extorquens)).